A 221-amino-acid polypeptide reads, in one-letter code: Putative efflux system component YhbJ (221 aa).

A helical membrane pass occupies residues Leu17 to Tyr37.

The protein belongs to the membrane fusion protein (MFP) (TC 8.A.1) family.

It localises to the cell membrane. The sequence is that of Putative efflux system component YhbJ (yhbJ) from Bacillus subtilis (strain 168).